The chain runs to 52 residues: UPF0391 membrane protein XCV0245 (52 aa).

Transmembrane regions (helical) follow at residues 5–25 (AIIF…GIAG) and 27–47 (ATNI…ISMF).

Belongs to the UPF0391 family.

It is found in the cell membrane. This chain is UPF0391 membrane protein XCV0245, found in Xanthomonas euvesicatoria pv. vesicatoria (strain 85-10) (Xanthomonas campestris pv. vesicatoria).